The sequence spans 152 residues: Endoribonuclease YbeY (152 aa).

Positions 113, 117, and 123 each coordinate Zn(2+).

It belongs to the endoribonuclease YbeY family. Zn(2+) is required as a cofactor.

Its subcellular location is the cytoplasm. Its function is as follows. Single strand-specific metallo-endoribonuclease involved in late-stage 70S ribosome quality control and in maturation of the 3' terminus of the 16S rRNA. The protein is Endoribonuclease YbeY of Acidovorax sp. (strain JS42).